The sequence spans 827 residues: Periplasmic nitrate reductase (827 aa).

Positions 1-32 (MELSRRDFMKANAAVAAAAAAGIVLPVKNVQA) form a signal peptide, tat-type signal. The 4Fe-4S Mo/W bis-MGD-type domain occupies 37 to 93 (IKWDKAPCRFCGTGCSVLVGTKDGRVVATQGDPDAEVNRGLNCIKGYFLSKIMYGAD). Residues Cys44, Cys47, Cys51, and Cys79 each coordinate [4Fe-4S] cluster. Residues Lys81, Gln148, Asn173, Cys177, 210 to 217 (WGSNMAEM), 241 to 245 (STFEH), Met371, Gln375, Asn481, 507 to 508 (SD), Lys530, Asp557, and 717 to 726 (TGRVLEHWHT) each bind Mo-bis(molybdopterin guanine dinucleotide). Position 793 (Phe793) interacts with substrate. Positions 801 and 818 each coordinate Mo-bis(molybdopterin guanine dinucleotide).

This sequence belongs to the prokaryotic molybdopterin-containing oxidoreductase family. NasA/NapA/NarB subfamily. In terms of assembly, component of the periplasmic nitrate reductase NapAB complex composed of NapA and NapB. The cofactor is [4Fe-4S] cluster. Mo-bis(molybdopterin guanine dinucleotide) is required as a cofactor. Predicted to be exported by the Tat system. The position of the signal peptide cleavage has not been experimentally proven.

The protein resides in the periplasm. It catalyses the reaction 2 Fe(II)-[cytochrome] + nitrate + 2 H(+) = 2 Fe(III)-[cytochrome] + nitrite + H2O. Its function is as follows. Catalytic subunit of the periplasmic nitrate reductase complex NapAB. Receives electrons from NapB and catalyzes the reduction of nitrate to nitrite. In Haemophilus ducreyi (strain 35000HP / ATCC 700724), this protein is Periplasmic nitrate reductase.